The primary structure comprises 706 residues: Elongation factor G (706 aa).

A tr-type G domain is found at 8–290 (KRYRNIGIVA…GVIEYMPSPT (283 aa)). GTP-binding positions include 17 to 24 (AHVDAGKT), 88 to 92 (DTPGH), and 142 to 145 (NKMD).

This sequence belongs to the TRAFAC class translation factor GTPase superfamily. Classic translation factor GTPase family. EF-G/EF-2 subfamily.

The protein resides in the cytoplasm. Functionally, catalyzes the GTP-dependent ribosomal translocation step during translation elongation. During this step, the ribosome changes from the pre-translocational (PRE) to the post-translocational (POST) state as the newly formed A-site-bound peptidyl-tRNA and P-site-bound deacylated tRNA move to the P and E sites, respectively. Catalyzes the coordinated movement of the two tRNA molecules, the mRNA and conformational changes in the ribosome. In Chromohalobacter salexigens (strain ATCC BAA-138 / DSM 3043 / CIP 106854 / NCIMB 13768 / 1H11), this protein is Elongation factor G.